The following is a 464-amino-acid chain: tRNA modification GTPase MnmE (464 aa).

(6S)-5-formyl-5,6,7,8-tetrahydrofolate-binding residues include arginine 25, glutamate 87, and lysine 130. Residues 226–386 (GLSVVLAGQP…LRAELLRIAG (161 aa)) enclose the TrmE-type G domain. Residue asparagine 236 participates in K(+) binding. Residues 236 to 241 (NVGKSS), 255 to 261 (TPIAGTT), and 280 to 283 (DTAG) each bind GTP. Serine 240 contacts Mg(2+). 3 residues coordinate K(+): threonine 255, isoleucine 257, and threonine 260. Residue threonine 261 coordinates Mg(2+). Position 464 (lysine 464) interacts with (6S)-5-formyl-5,6,7,8-tetrahydrofolate.

This sequence belongs to the TRAFAC class TrmE-Era-EngA-EngB-Septin-like GTPase superfamily. TrmE GTPase family. In terms of assembly, homodimer. Heterotetramer of two MnmE and two MnmG subunits. It depends on K(+) as a cofactor.

It is found in the cytoplasm. Its function is as follows. Exhibits a very high intrinsic GTPase hydrolysis rate. Involved in the addition of a carboxymethylaminomethyl (cmnm) group at the wobble position (U34) of certain tRNAs, forming tRNA-cmnm(5)s(2)U34. The protein is tRNA modification GTPase MnmE of Burkholderia lata (strain ATCC 17760 / DSM 23089 / LMG 22485 / NCIMB 9086 / R18194 / 383).